Reading from the N-terminus, the 785-residue chain is Neutral ceramidase (785 aa).

The signal sequence occupies residues 1–35 (MEASSWLCYQARGFGSSRVWLWLLLALVLLNCSLV). A glycan (N-linked (GlcNAc...) asparagine) is linked at Asn31. Ser359 (nucleophile) is an active-site residue. Asn377, Asn675, and Asn685 each carry an N-linked (GlcNAc...) asparagine glycan.

This sequence belongs to the neutral ceramidase family. Expressed in seedlings, with higher levels in roots than in shoots.

Its subcellular location is the secreted. The protein resides in the endoplasmic reticulum. It is found in the golgi apparatus. It catalyses the reaction an N-acylsphing-4-enine + H2O = sphing-4-enine + a fatty acid. Its activity is regulated as follows. Enhanced activity in the presence of calcium, magnesium, manganese and zinc ions, but inhibited activity in the presence of iron ion. In terms of biological role, hydrolyzes the sphingolipid ceramide into sphingosine and free fatty acid. Uses ceramide instead of phytoceramide as substrate. This chain is Neutral ceramidase, found in Oryza sativa subsp. japonica (Rice).